The chain runs to 378 residues: Homoserine O-acetyltransferase (378 aa).

Residues 54–355 (NAILVCHALS…NNPAGHDSFL (302 aa)) enclose the AB hydrolase-1 domain. Catalysis depends on Ser159, which acts as the Nucleophile. A substrate-binding site is contributed by Arg228. Catalysis depends on residues Asp318 and His351. Asp352 is a binding site for substrate.

This sequence belongs to the AB hydrolase superfamily. MetX family. As to quaternary structure, homodimer.

Its subcellular location is the cytoplasm. The enzyme catalyses L-homoserine + acetyl-CoA = O-acetyl-L-homoserine + CoA. The protein operates within amino-acid biosynthesis; L-methionine biosynthesis via de novo pathway; O-acetyl-L-homoserine from L-homoserine: step 1/1. Its function is as follows. Transfers an acetyl group from acetyl-CoA to L-homoserine, forming acetyl-L-homoserine. The sequence is that of Homoserine O-acetyltransferase from Leptospira biflexa serovar Patoc (strain Patoc 1 / Ames).